A 789-amino-acid polypeptide reads, in one-letter code: MPPRQLSQTTPSCAVVPRKRRLVAALIAVPGLMPALAHAQLVGEAAQPQPIDAPWGMQLAPQLEERPLQPGQKPATFVLGDTTSGTTDQDMAAKGSAEVRRNTVVIKADALHYDQDTDMADAYGSVHVVNNGNSFVGPEAHMRVDSSEGFMTAPKYHFNVTGGSGSAERVDLLDNERSVFTKGTYTACACADDPAWYIKGSEFDFDTGADEGVAHNGVLFFQGFPVFASPWLSFPLSGERRSGVLPPTFSLSSSNGFELSVPYYFNIAPNRDLTLTPRLISKRGVQLQSTFRYLSPTYSGSITGEFLPDDHLTKTNRYALYIQHNQNFGNGFGGYIYYNKVSDNTYPEDLSSSVNQFMNGTQLLYQQEAGLTYNNGPWSVLAREQHWQTLTPSVAPYGREPQLNVKYAKYNVGGFDYGAEADYSNFRITTADMTQGQRVMFNPYLSYSVVGPGYFVTPKVQWHFASYNLNHLSDADVAAGTPKNFTESIPTLTFDTGLVFDRSVRIFGQDYIQTLEPRLYYVYTPYRNQQSAPLFDTADSDFGLAEIFTPNTFVGNDRIADANRLTAALTTRFIDAATGDERARFVIAQQYYFQDQRVTLQSTQTSAQATHSDLIAGASLKLGAGFASETAFQYNADNNQLVKTSVGFGFSPATGKVINVAYRYTRANTTLDNTPINQVLISGQWPLAHRVYGVGRFNYDLGGHRIVDGLVGLQYDADCWTLGAGIQRYANGLNTSGQNQSSTRFLAQLTFKGLSSVDNGLMTAFRSSVAGYTPLPPPPPPESRFTNYE.

Positions 1 to 39 are cleaved as a signal peptide; the sequence is MPPRQLSQTTPSCAVVPRKRRLVAALIAVPGLMPALAHA.

This sequence belongs to the LptD family. As to quaternary structure, component of the lipopolysaccharide transport and assembly complex. Interacts with LptE and LptA.

The protein resides in the cell outer membrane. In terms of biological role, together with LptE, is involved in the assembly of lipopolysaccharide (LPS) at the surface of the outer membrane. In Paraburkholderia xenovorans (strain LB400), this protein is LPS-assembly protein LptD.